Consider the following 366-residue polypeptide: Histidinol-phosphate aminotransferase (366 aa).

At Lys-227 the chain carries N6-(pyridoxal phosphate)lysine.

It belongs to the class-II pyridoxal-phosphate-dependent aminotransferase family. Histidinol-phosphate aminotransferase subfamily. Homodimer. Pyridoxal 5'-phosphate serves as cofactor.

The enzyme catalyses L-histidinol phosphate + 2-oxoglutarate = 3-(imidazol-4-yl)-2-oxopropyl phosphate + L-glutamate. Its pathway is amino-acid biosynthesis; L-histidine biosynthesis; L-histidine from 5-phospho-alpha-D-ribose 1-diphosphate: step 7/9. This Campylobacter hominis (strain ATCC BAA-381 / DSM 21671 / CCUG 45161 / LMG 19568 / NCTC 13146 / CH001A) protein is Histidinol-phosphate aminotransferase.